A 499-amino-acid polypeptide reads, in one-letter code: NAD(P)H-quinone oxidoreductase chain 4, chloroplastic (499 aa).

14 helical membrane passes run 4-24 (FPWL…IPFL), 31-51 (IIRW…TYIF), 87-107 (IGLI…AWPV), 113-133 (LFYF…ASQD), 134-154 (ILLF…LLAM), 167-187 (FILY…IMAF), 211-231 (IIIY…IPFH), 242-262 (HYST…YGLI), 274-294 (SFFA…AALT), 310-330 (VSHM…GLNG), 331-351 (AILQ…LAGI), 385-405 (SLAL…LGVI), 416-436 (IIII…LLSM), and 462-482 (IFIL…PNFV).

The protein belongs to the complex I subunit 4 family.

Its subcellular location is the plastid. It is found in the chloroplast thylakoid membrane. It carries out the reaction a plastoquinone + NADH + (n+1) H(+)(in) = a plastoquinol + NAD(+) + n H(+)(out). The catalysed reaction is a plastoquinone + NADPH + (n+1) H(+)(in) = a plastoquinol + NADP(+) + n H(+)(out). In Marchantia polymorpha (Common liverwort), this protein is NAD(P)H-quinone oxidoreductase chain 4, chloroplastic (ndhD).